The chain runs to 212 residues: Fe/S biogenesis protein NfuA (212 aa).

Residues Cys169 and Cys172 each coordinate [4Fe-4S] cluster.

The protein belongs to the NfuA family. As to quaternary structure, homodimer. Requires [4Fe-4S] cluster as cofactor.

In terms of biological role, involved in iron-sulfur cluster biogenesis. Binds a 4Fe-4S cluster, can transfer this cluster to apoproteins, and thereby intervenes in the maturation of Fe/S proteins. Could also act as a scaffold/chaperone for damaged Fe/S proteins. In Acinetobacter baylyi (strain ATCC 33305 / BD413 / ADP1), this protein is Fe/S biogenesis protein NfuA.